The following is a 201-amino-acid chain: Holliday junction branch migration complex subunit RuvA (201 aa).

Residues 1 to 64 are domain I; sequence MYEYIRGQFQ…EDFIGLYGFT (64 aa). The interval 65-143 is domain II; that stretch reads TREELEMFKL…PDELTSEEGE (79 aa). A flexible linker region spans residues 144 to 152; that stretch reads LIEGINDNS. The interval 153-201 is domain III; that stretch reads DYSFNINETLSALMALGYTEKEAQKALEKVDKTLSIENMIKESLKLLMR.

This sequence belongs to the RuvA family. Homotetramer. Forms an RuvA(8)-RuvB(12)-Holliday junction (HJ) complex. HJ DNA is sandwiched between 2 RuvA tetramers; dsDNA enters through RuvA and exits via RuvB. An RuvB hexamer assembles on each DNA strand where it exits the tetramer. Each RuvB hexamer is contacted by two RuvA subunits (via domain III) on 2 adjacent RuvB subunits; this complex drives branch migration. In the full resolvosome a probable DNA-RuvA(4)-RuvB(12)-RuvC(2) complex forms which resolves the HJ.

It is found in the cytoplasm. Its function is as follows. The RuvA-RuvB-RuvC complex processes Holliday junction (HJ) DNA during genetic recombination and DNA repair, while the RuvA-RuvB complex plays an important role in the rescue of blocked DNA replication forks via replication fork reversal (RFR). RuvA specifically binds to HJ cruciform DNA, conferring on it an open structure. The RuvB hexamer acts as an ATP-dependent pump, pulling dsDNA into and through the RuvAB complex. HJ branch migration allows RuvC to scan DNA until it finds its consensus sequence, where it cleaves and resolves the cruciform DNA. The protein is Holliday junction branch migration complex subunit RuvA of Clostridium perfringens (strain ATCC 13124 / DSM 756 / JCM 1290 / NCIMB 6125 / NCTC 8237 / Type A).